A 137-amino-acid chain; its full sequence is Basic phospholipase A2 3 (137 aa).

The signal sequence occupies residues 1-11; the sequence is LVAVCVSLLGA. A propeptide spanning residues 12–19 is cleaved from the precursor; it reads ANIPPQPL. 7 cysteine pairs are disulfide-bonded: Cys30–Cys89, Cys44–Cys136, Cys46–Cys62, Cys61–Cys117, Cys68–Cys110, Cys78–Cys103, and Cys96–Cys108. Residues Tyr45, Gly47, and Gly49 each coordinate Ca(2+). His65 is an active-site residue. Ca(2+) is bound at residue Asp66. Asp111 is a catalytic residue.

It belongs to the phospholipase A2 family. Group I subfamily. D49 sub-subfamily. Monomer, or homotrimer. Was firstly described as a trimer, but has been reinterpreted with the possibility of being a monomer. The cofactor is Ca(2+). As to expression, expressed by the venom gland.

The protein resides in the secreted. The catalysed reaction is a 1,2-diacyl-sn-glycero-3-phosphocholine + H2O = a 1-acyl-sn-glycero-3-phosphocholine + a fatty acid + H(+). Snake venom phospholipase A2 (PLA2) that shows anticoagulant and neurotoxic activities. PLA2 catalyzes the calcium-dependent hydrolysis of the 2-acyl groups in 3-sn-phosphoglycerides. This chain is Basic phospholipase A2 3, found in Bungarus caeruleus (Indian krait).